Here is a 218-residue protein sequence, read N- to C-terminus: Small ribosomal subunit protein uS3 (218 aa).

Positions Ile38 to Lys106 constitute a KH type-2 domain.

The protein belongs to the universal ribosomal protein uS3 family. As to quaternary structure, part of the 30S ribosomal subunit. Forms a tight complex with proteins S10 and S14.

Its function is as follows. Binds the lower part of the 30S subunit head. Binds mRNA in the 70S ribosome, positioning it for translation. The polypeptide is Small ribosomal subunit protein uS3 (Geobacillus stearothermophilus (Bacillus stearothermophilus)).